Consider the following 182-residue polypeptide: Mu-like prophage FluMu protein gp45 (182 aa).

The segment at 159–182 (TDHQSSGISGKNHDHEERVGKPVP) is disordered. Positions 169–182 (KNHDHEERVGKPVP) are enriched in basic and acidic residues.

It to phage Mu protein gp45.

This is Mu-like prophage FluMu protein gp45 from Haemophilus influenzae (strain ATCC 51907 / DSM 11121 / KW20 / Rd).